Reading from the N-terminus, the 256-residue chain is GTP cyclohydrolase FolE2 (256 aa).

It belongs to the GTP cyclohydrolase IV family.

It catalyses the reaction GTP + H2O = 7,8-dihydroneopterin 3'-triphosphate + formate + H(+). It functions in the pathway cofactor biosynthesis; 7,8-dihydroneopterin triphosphate biosynthesis; 7,8-dihydroneopterin triphosphate from GTP: step 1/1. In terms of biological role, converts GTP to 7,8-dihydroneopterin triphosphate. The sequence is that of GTP cyclohydrolase FolE2 from Caldicellulosiruptor bescii (strain ATCC BAA-1888 / DSM 6725 / KCTC 15123 / Z-1320) (Anaerocellum thermophilum).